Here is a 365-residue protein sequence, read N- to C-terminus: Histidinol-phosphate aminotransferase (365 aa).

At Lys223 the chain carries N6-(pyridoxal phosphate)lysine.

Belongs to the class-II pyridoxal-phosphate-dependent aminotransferase family. Histidinol-phosphate aminotransferase subfamily. As to quaternary structure, homodimer. It depends on pyridoxal 5'-phosphate as a cofactor.

It catalyses the reaction L-histidinol phosphate + 2-oxoglutarate = 3-(imidazol-4-yl)-2-oxopropyl phosphate + L-glutamate. The protein operates within amino-acid biosynthesis; L-histidine biosynthesis; L-histidine from 5-phospho-alpha-D-ribose 1-diphosphate: step 7/9. This chain is Histidinol-phosphate aminotransferase, found in Brucella abortus (strain 2308).